The following is a 412-amino-acid chain: Adherens junction-associated protein 1 (412 aa).

Residues 1–43 form the signal peptide; sequence MWIQQLLGLSSMSIRWPGRSLGSHAWILIAMLQLAVDFPSCDS. Residues 44-284 lie on the Extracellular side of the membrane; sequence LGPGPEFRLL…GETSGLAVHQ (241 aa). Disordered stretches follow at residues 62–175 and 243–271; these read LWSL…GRPT and DPWK…IQPP. The span at 121–146 shows a compositional bias: low complexity; that stretch reads PPAATRSSPSLASATASSSIVTAGAA. The span at 160 to 171 shows a compositional bias: basic and acidic residues; that stretch reads HDTEFNDFDFRG. The segment covering 248 to 263 has biased composition (low complexity); sequence TPVGVSTTEPSTSPSS. The chain crosses the membrane as a helical span at residues 285–305; that stretch reads IITITVSLIMVIAALITTLVL. The interval 305 to 412 is targeting signals; it reads LKNCCAPSGH…VSEKWFEISC (108 aa). The Cytoplasmic segment spans residues 306–412; that stretch reads KNCCAPSGHT…VSEKWFEISC (107 aa).

Forms a complex with CDH1 and CTNNB1; interacts directly with CTNNB1. Interacts with AP1M2 and isoform 2 of BSG/CD147.

It is found in the basolateral cell membrane. The protein localises to the apical cell membrane. The protein resides in the cell junction. Its subcellular location is the adherens junction. Functionally, plays a role in cell adhesion and cell migration. The chain is Adherens junction-associated protein 1 (Ajap1) from Mus musculus (Mouse).